Here is a 122-residue protein sequence, read N- to C-terminus: Large ribosomal subunit protein uL14 (122 aa).

The protein belongs to the universal ribosomal protein uL14 family. As to quaternary structure, part of the 50S ribosomal subunit. Forms a cluster with proteins L3 and L19. In the 70S ribosome, L14 and L19 interact and together make contacts with the 16S rRNA in bridges B5 and B8.

Functionally, binds to 23S rRNA. Forms part of two intersubunit bridges in the 70S ribosome. This Paraburkholderia phytofirmans (strain DSM 17436 / LMG 22146 / PsJN) (Burkholderia phytofirmans) protein is Large ribosomal subunit protein uL14.